A 208-amino-acid chain; its full sequence is Protein disulfide-isomerase A3 (208 aa).

Residues Arg1–Lys44 form the Thioredoxin 1 domain. The residue at position 44 (Lys44) is an N6-succinyllysine. N6-acetyllysine is present on Lys49. Thr133 bears the Phosphothreonine mark. The Thioredoxin 2 domain occupies Ser151–Lys208. At Lys163 the chain carries N6-acetyllysine.

This sequence belongs to the protein disulfide isomerase family. Part of the major histocompatibility complex class I (MHC I) peptide loading complex composed of TAP1, TAP2, B2M, MHC heavy chain, TAPBP, PDIA3, and CALR. Interacts with ERP27 and CANX. Interacts with SERPINA2 and SERPINA1. Interacts with ATP2A2. In terms of processing, within the major histocompatibility complex class I (MHC I) peptide loading complex forms reversible disulfide-linked heterodimers with TAPBP as part of its protein folding chaperone activity. This is essential to assist the dynamic assembly of the MHC I complex with high affinity antigens in the endoplasmic reticulum. Post-translationally, phosphorylated. In the caput epididymal spermatozoa, detected in the mid-peice and at low levels in the principal piece. In the cauda epididymal spermatozoa, detected at very low levels in the principal piece and not in the mid-piece (at protein level).

It is found in the endoplasmic reticulum. Its subcellular location is the endoplasmic reticulum lumen. The protein resides in the melanosome. The enzyme catalyses Catalyzes the rearrangement of -S-S- bonds in proteins.. In terms of biological role, protein disulfide isomerase that catalyzes the formation, isomerization, and reduction or oxidation of disulfide bonds in client proteins and functions as a protein folding chaperone. Core component of the major histocompatibility complex class I (MHC I) peptide loading complex where it functions as an essential folding chaperone for TAPBP. Through TAPBP, assists the dynamic assembly of the MHC I complex with high affinity antigens in the endoplasmic reticulum. Therefore, plays a crucial role in the presentation of antigens to cytotoxic T cells in adaptive immunity. In Mesocricetus auratus (Golden hamster), this protein is Protein disulfide-isomerase A3.